A 198-amino-acid polypeptide reads, in one-letter code: MQVQPKYFEKSQYIETLNGNKVSKSSILCGIMNIRLHGKTIIKPGVIVRGDLASVNIGRLSIISENTVIRPSSKKFKGSLVYFPQNIGDHVLVGEGCVISAASIGSNVYIGNNCIISKRCILKDCCIIADNTILPPDTVVPPFTYYSGTPGVYKEDLPDCIEQFQKEYTTSLYESFLPNTPASKGLPSTPTKLQTTTT.

Over residues 179–188 the composition is skewed to polar residues; that stretch reads NTPASKGLPS. Residues 179–198 form a disordered region; it reads NTPASKGLPSTPTKLQTTTT. Over residues 189-198 the composition is skewed to low complexity; that stretch reads TPTKLQTTTT.

The protein belongs to the dynactin subunits 5/6 family. Dynactin subunit 5 subfamily. As to quaternary structure, member of the pointed-end complex of the dynactin shoulder complex.

Its subcellular location is the cytoplasm. The protein resides in the cytoskeleton. This chain is Dynactin subunit 5 (dynE), found in Dictyostelium discoideum (Social amoeba).